We begin with the raw amino-acid sequence, 160 residues long: Serine-protein kinase RsbW (160 aa).

This sequence belongs to the anti-sigma-factor family.

It catalyses the reaction L-seryl-[protein] + ATP = O-phospho-L-seryl-[protein] + ADP + H(+). The enzyme catalyses L-threonyl-[protein] + ATP = O-phospho-L-threonyl-[protein] + ADP + H(+). Functionally, negative regulator of sigma-B activity. Phosphorylates and inactivates its specific antagonist protein, RsbV. Upon phosphorylation of RsbV, RsbW is released and binds to sigma-B, thereby blocking its ability to form an RNA polymerase holoenzyme (E-sigma-B). This chain is Serine-protein kinase RsbW, found in Bacillus cereus (strain B4264).